The primary structure comprises 180 residues: MTLKELVVGFGTQVRSLWMIGLHAFHKRETLMYPEEPVYLPPRYRGRIVLTRDPDGEERCVACNLCAVACPVGCISLQKAEQKDGRWYPEFFRINFSRCIFCGLCEEACPTTAIQLTPDFEMGEFKRQDLVYEKEDLLISGPGKYPEYNFYRMAGMAIDGKQKGEAENEAKPIDVKGLMP.

4Fe-4S ferredoxin-type domains follow at residues 50-80 (LTRD…LQKA) and 90-119 (EFFR…LTPD). Cys-60, Cys-63, Cys-66, Cys-70, Cys-99, Cys-102, Cys-105, and Cys-109 together coordinate [4Fe-4S] cluster.

This sequence belongs to the complex I 23 kDa subunit family. NDH-1 is composed of 13 different subunits. Subunits NuoA, H, J, K, L, M, N constitute the membrane sector of the complex. The cofactor is [4Fe-4S] cluster.

It localises to the cell inner membrane. It carries out the reaction a quinone + NADH + 5 H(+)(in) = a quinol + NAD(+) + 4 H(+)(out). Its function is as follows. NDH-1 shuttles electrons from NADH, via FMN and iron-sulfur (Fe-S) centers, to quinones in the respiratory chain. The immediate electron acceptor for the enzyme in this species is believed to be ubiquinone. Couples the redox reaction to proton translocation (for every two electrons transferred, four hydrogen ions are translocated across the cytoplasmic membrane), and thus conserves the redox energy in a proton gradient. The protein is NADH-quinone oxidoreductase subunit I of Yersinia pseudotuberculosis serotype O:1b (strain IP 31758).